Consider the following 149-residue polypeptide: Nucleoside diphosphate kinase (149 aa).

ATP is bound by residues lysine 9, phenylalanine 57, arginine 85, threonine 91, arginine 102, and asparagine 112. Catalysis depends on histidine 115, which acts as the Pros-phosphohistidine intermediate.

Belongs to the NDK family. Homotetramer. Requires Mg(2+) as cofactor.

It localises to the cytoplasm. It catalyses the reaction a 2'-deoxyribonucleoside 5'-diphosphate + ATP = a 2'-deoxyribonucleoside 5'-triphosphate + ADP. The catalysed reaction is a ribonucleoside 5'-diphosphate + ATP = a ribonucleoside 5'-triphosphate + ADP. Major role in the synthesis of nucleoside triphosphates other than ATP. The ATP gamma phosphate is transferred to the NDP beta phosphate via a ping-pong mechanism, using a phosphorylated active-site intermediate. This chain is Nucleoside diphosphate kinase, found in Pelotomaculum thermopropionicum (strain DSM 13744 / JCM 10971 / SI).